We begin with the raw amino-acid sequence, 397 residues long: 1-deoxy-D-xylulose 5-phosphate reductoisomerase (397 aa).

The NADPH site is built by Thr10, Gly11, Ser12, Ile13, Gly36, Asn38, and Asn128. Lys129 contributes to the 1-deoxy-D-xylulose 5-phosphate binding site. Glu130 contributes to the NADPH binding site. Asp154 is a Mn(2+) binding site. The 1-deoxy-D-xylulose 5-phosphate site is built by Ser155, Glu156, Ser180, and His203. Residue Glu156 coordinates Mn(2+). Gly209 provides a ligand contact to NADPH. Asn221, Lys222, and Glu225 together coordinate 1-deoxy-D-xylulose 5-phosphate. Glu225 provides a ligand contact to Mn(2+).

The protein belongs to the DXR family. The cofactor is Mg(2+). It depends on Mn(2+) as a cofactor.

It carries out the reaction 2-C-methyl-D-erythritol 4-phosphate + NADP(+) = 1-deoxy-D-xylulose 5-phosphate + NADPH + H(+). It participates in isoprenoid biosynthesis; isopentenyl diphosphate biosynthesis via DXP pathway; isopentenyl diphosphate from 1-deoxy-D-xylulose 5-phosphate: step 1/6. In terms of biological role, catalyzes the NADPH-dependent rearrangement and reduction of 1-deoxy-D-xylulose-5-phosphate (DXP) to 2-C-methyl-D-erythritol 4-phosphate (MEP). The polypeptide is 1-deoxy-D-xylulose 5-phosphate reductoisomerase (Solibacter usitatus (strain Ellin6076)).